A 192-amino-acid chain; its full sequence is UPF0301 protein Bamb_0737 (192 aa).

Belongs to the UPF0301 (AlgH) family.

The protein is UPF0301 protein Bamb_0737 of Burkholderia ambifaria (strain ATCC BAA-244 / DSM 16087 / CCUG 44356 / LMG 19182 / AMMD) (Burkholderia cepacia (strain AMMD)).